A 582-amino-acid polypeptide reads, in one-letter code: Aspartate--tRNA ligase (582 aa).

Position 174 (Glu174) interacts with L-aspartate. The interval 198–201 (QITK) is aspartate. Arg220 is an L-aspartate binding site. ATP contacts are provided by residues 220–222 (RDE) and Gln229. L-aspartate is bound at residue His443. Glu477 contacts ATP. Arg484 serves as a coordination point for L-aspartate. 529 to 532 (GLDR) is an ATP binding site.

The protein belongs to the class-II aminoacyl-tRNA synthetase family. Type 1 subfamily. In terms of assembly, homodimer.

The protein localises to the cytoplasm. It carries out the reaction tRNA(Asp) + L-aspartate + ATP = L-aspartyl-tRNA(Asp) + AMP + diphosphate. Catalyzes the attachment of L-aspartate to tRNA(Asp) in a two-step reaction: L-aspartate is first activated by ATP to form Asp-AMP and then transferred to the acceptor end of tRNA(Asp). This Streptococcus pyogenes serotype M28 (strain MGAS6180) protein is Aspartate--tRNA ligase.